The chain runs to 480 residues: Glycogen synthase (480 aa).

Position 15 (K15) interacts with ADP-alpha-D-glucose.

This sequence belongs to the glycosyltransferase 1 family. Bacterial/plant glycogen synthase subfamily.

It carries out the reaction [(1-&gt;4)-alpha-D-glucosyl](n) + ADP-alpha-D-glucose = [(1-&gt;4)-alpha-D-glucosyl](n+1) + ADP + H(+). Its pathway is glycan biosynthesis; glycogen biosynthesis. Its function is as follows. Synthesizes alpha-1,4-glucan chains using ADP-glucose. The protein is Glycogen synthase of Desulforamulus reducens (strain ATCC BAA-1160 / DSM 100696 / MI-1) (Desulfotomaculum reducens).